Reading from the N-terminus, the 384-residue chain is Soluble hydrogenase, small subunit (384 aa).

At lysine 194 the chain carries N6-(pyridoxal phosphate)lysine.

Belongs to the class-V pyridoxal-phosphate-dependent aminotransferase family. In terms of assembly, heterodimer of a large and a small subunit. Pyridoxal 5'-phosphate is required as a cofactor.

It localises to the cytoplasm. Functionally, soluble hydrogenase catalyzes both production and consumption of hydrogen from suitable artificial electron donors or acceptors. This subunit catalyzes the tritium-exchange activity. The polypeptide is Soluble hydrogenase, small subunit (Synechococcus sp. (strain PCC 6716)).